Consider the following 352-residue polypeptide: MEVEKELKTFSEVWISAIAAACYCRFVPAVAPHGGALRLLLLLPVVLLFIFLPLRLSSFHLGGPTALYLVWLANFKLLLFAFHLGPLSNPSLSLLHFISTTLLPIKFRDDPSNDHEKNKRTLSFEWRKVVLFVAKLVFFAGILKIYEFRKDLPHFVISVLYCFHFYLGTEITLAASAVIARATLGLDLYPQFNEPYLATSLQDFWGRRWNLMVSDILGLTTYQPVRRVLSRWVRLRWEVAGAMLVAFTVSGLMHEVFFFYLTRARPSWEVTGFFVLHGVCTAVEMVVKKAVSGKVRLRREVSGALTVGFVMVTGGWLFLPQLVRHGVDLKTIDEYPVMFNYTQKKLMGLLGW.

A run of 8 helical transmembrane segments spans residues 13–33, 34–54, 67–87, 128–148, 155–175, 239–259, 267–287, and 303–323; these read VWIS…VAPH, GGAL…FLPL, LYLV…LGPL, KVVL…IYEF, FVIS…TLAA, VAGA…VFFF, SWEV…EMVV, and GALT…PQLV.

The protein belongs to the wax synthase family.

It is found in the microsome membrane. The enzyme catalyses a long chain fatty alcohol + a fatty acyl-CoA = a wax ester + CoA. In terms of biological role, catalyzes the final step in the synthesis of long-chain linear esters (waxes). Has activity with both saturated and monounsaturated acyl-CoA ranging from 14 to 24 carbons in length, but C20:1 acyl-CoA is the preferred substrate. This Simmondsia chinensis (Jojoba) protein is Long-chain-alcohol O-fatty-acyltransferase.